The following is a 206-amino-acid chain: Type III pantothenate kinase (206 aa).

An ATP-binding site is contributed by 5-12 (DIGNTFLH). Residues Y69 and 73–76 (GVDR) contribute to the substrate site. Catalysis depends on D75, which acts as the Proton acceptor. K(+) is bound at residue D90. Position 93 (S93) interacts with ATP. T145 lines the substrate pocket.

Belongs to the type III pantothenate kinase family. In terms of assembly, homodimer. NH4(+) serves as cofactor. It depends on K(+) as a cofactor.

It localises to the cytoplasm. It catalyses the reaction (R)-pantothenate + ATP = (R)-4'-phosphopantothenate + ADP + H(+). The protein operates within cofactor biosynthesis; coenzyme A biosynthesis; CoA from (R)-pantothenate: step 1/5. Functionally, catalyzes the phosphorylation of pantothenate (Pan), the first step in CoA biosynthesis. This is Type III pantothenate kinase from Helicobacter hepaticus (strain ATCC 51449 / 3B1).